Consider the following 326-residue polypeptide: tRNA(Ile)-lysidine synthase (326 aa).

23-28 (SGGVDS) lines the ATP pocket.

This sequence belongs to the tRNA(Ile)-lysidine synthase family.

The protein resides in the cytoplasm. The enzyme catalyses cytidine(34) in tRNA(Ile2) + L-lysine + ATP = lysidine(34) in tRNA(Ile2) + AMP + diphosphate + H(+). Functionally, ligates lysine onto the cytidine present at position 34 of the AUA codon-specific tRNA(Ile) that contains the anticodon CAU, in an ATP-dependent manner. Cytidine is converted to lysidine, thus changing the amino acid specificity of the tRNA from methionine to isoleucine. This is tRNA(Ile)-lysidine synthase from Wolinella succinogenes (strain ATCC 29543 / DSM 1740 / CCUG 13145 / JCM 31913 / LMG 7466 / NCTC 11488 / FDC 602W) (Vibrio succinogenes).